The primary structure comprises 130 residues: Small ribosomal subunit protein uS9 (130 aa).

Belongs to the universal ribosomal protein uS9 family.

In Shewanella piezotolerans (strain WP3 / JCM 13877), this protein is Small ribosomal subunit protein uS9.